Here is a 99-residue protein sequence, read N- to C-terminus: UPF0473 protein SMU_2077c (99 aa).

It belongs to the UPF0473 family.

This is UPF0473 protein SMU_2077c from Streptococcus mutans serotype c (strain ATCC 700610 / UA159).